A 54-amino-acid chain; its full sequence is Large ribosomal subunit protein bL33 (54 aa).

Belongs to the bacterial ribosomal protein bL33 family.

The chain is Large ribosomal subunit protein bL33 from Stenotrophomonas maltophilia (strain R551-3).